We begin with the raw amino-acid sequence, 224 residues long: Orotidine 5'-phosphate decarboxylase (224 aa).

Substrate-binding positions include aspartate 10, lysine 32, 59 to 68 (DLKLHDIPNT), threonine 115, arginine 175, glutamine 184, glycine 204, and arginine 205. Catalysis depends on lysine 61, which acts as the Proton donor.

Belongs to the OMP decarboxylase family. Type 1 subfamily. As to quaternary structure, homodimer.

It carries out the reaction orotidine 5'-phosphate + H(+) = UMP + CO2. It participates in pyrimidine metabolism; UMP biosynthesis via de novo pathway; UMP from orotate: step 2/2. Functionally, catalyzes the decarboxylation of orotidine 5'-monophosphate (OMP) to uridine 5'-monophosphate (UMP). In Erythrobacter litoralis (strain HTCC2594), this protein is Orotidine 5'-phosphate decarboxylase.